The following is a 348-amino-acid chain: Protein pelota homolog (348 aa).

This sequence belongs to the eukaryotic release factor 1 family. Pelota subfamily. As to quaternary structure, monomer. Requires a divalent metal cation as cofactor.

It localises to the cytoplasm. Functionally, may function in recognizing stalled ribosomes, interact with stem-loop structures in stalled mRNA molecules, and effect endonucleolytic cleavage of the mRNA. May play a role in the release non-functional ribosomes and degradation of damaged mRNAs. Has endoribonuclease activity. The protein is Protein pelota homolog of Methanococcus maripaludis (strain DSM 14266 / JCM 13030 / NBRC 101832 / S2 / LL).